We begin with the raw amino-acid sequence, 650 residues long: Pentatricopeptide repeat-containing protein At2g41080 (650 aa).

PPR repeat units lie at residues 43–77, 78–112, 114–139, 140–174, 175–209, 210–240, 241–275, 276–310, 311–341, 342–372, 378–413, and 414–444; these read NTSL…GFSS, DKFI…NYMS, NILI…MPDR, KLTT…GFSP, DEYT…GLEL, DLVV…MPVR, NLVA…GCRP, NKIT…GASS, VVAV…REDE, DEVM…MAEQ, NEVA…GFKP, and GLKH…MPIK. A type E motif region spans residues 449-524; sequence IWKTLLSACN…EAGISWFEHK (76 aa). The segment at 525–555 is type E(+) motif; the sequence is GEVHQFKMGDRSQSKSKEIYSYLKELTLEMK. Residues 556–650 form a type DYW motif region; sequence LKGYKPDTAS…NGKCSCGDYW (95 aa).

Belongs to the PPR family. PCMP-H subfamily.

The sequence is that of Pentatricopeptide repeat-containing protein At2g41080 (PCMP-H29) from Arabidopsis thaliana (Mouse-ear cress).